The chain runs to 193 residues: Xanthine phosphoribosyltransferase (193 aa).

Residues L20 and T27 each coordinate xanthine. 128 to 132 (ANGQA) contacts 5-phospho-alpha-D-ribose 1-diphosphate. Xanthine is bound at residue K156.

Belongs to the purine/pyrimidine phosphoribosyltransferase family. Xpt subfamily. As to quaternary structure, homodimer.

The protein localises to the cytoplasm. It catalyses the reaction XMP + diphosphate = xanthine + 5-phospho-alpha-D-ribose 1-diphosphate. The protein operates within purine metabolism; XMP biosynthesis via salvage pathway; XMP from xanthine: step 1/1. Functionally, converts the preformed base xanthine, a product of nucleic acid breakdown, to xanthosine 5'-monophosphate (XMP), so it can be reused for RNA or DNA synthesis. In Streptococcus pneumoniae serotype 19F (strain G54), this protein is Xanthine phosphoribosyltransferase.